Here is a 126-residue protein sequence, read N- to C-terminus: Ribosome-binding factor A (126 aa).

It belongs to the RbfA family. As to quaternary structure, monomer. Binds 30S ribosomal subunits, but not 50S ribosomal subunits or 70S ribosomes.

The protein localises to the cytoplasm. One of several proteins that assist in the late maturation steps of the functional core of the 30S ribosomal subunit. Associates with free 30S ribosomal subunits (but not with 30S subunits that are part of 70S ribosomes or polysomes). Required for efficient processing of 16S rRNA. May interact with the 5'-terminal helix region of 16S rRNA. In Treponema pallidum (strain Nichols), this protein is Ribosome-binding factor A.